Here is a 315-residue protein sequence, read N- to C-terminus: Methionyl-tRNA formyltransferase (315 aa).

The interval 2-189 is N-terminal domain; the sequence is SDSLRIIFAG…LITTLKQLAD (188 aa). 113–116 contributes to the (6S)-5,6,7,8-tetrahydrofolate binding site; that stretch reads SLLP. A C-terminal domain region spans residues 210-315; it reads KEEARIDWSL…EWFIPGNRLA (106 aa).

It belongs to the Fmt family.

It carries out the reaction L-methionyl-tRNA(fMet) + (6R)-10-formyltetrahydrofolate = N-formyl-L-methionyl-tRNA(fMet) + (6S)-5,6,7,8-tetrahydrofolate + H(+). In terms of biological role, attaches a formyl group to the free amino group of methionyl-tRNA(fMet). The formyl group appears to play a dual role in the initiator identity of N-formylmethionyl-tRNA by promoting its recognition by IF2 and preventing the misappropriation of this tRNA by the elongation apparatus. This chain is Methionyl-tRNA formyltransferase, found in Salmonella typhi.